We begin with the raw amino-acid sequence, 297 residues long: HTH-type transcriptional regulator ArgP (297 aa).

An HTH lysR-type domain is found at 4 to 60 (PDYRTLQALDAVIRERGFERAAQKLCITQSAVSQRIKQLENLFGQPLLVRTVPPRPT). The H-T-H motif DNA-binding region spans 21 to 40 (FERAAQKLCITQSAVSQRIK).

Belongs to the LysR transcriptional regulatory family. As to quaternary structure, homodimer.

Controls the transcription of genes involved in arginine and lysine metabolism. In Yersinia enterocolitica serotype O:8 / biotype 1B (strain NCTC 13174 / 8081), this protein is HTH-type transcriptional regulator ArgP.